A 141-amino-acid polypeptide reads, in one-letter code: Large ribosomal subunit protein uL11 (141 aa).

It belongs to the universal ribosomal protein uL11 family. As to quaternary structure, part of the ribosomal stalk of the 50S ribosomal subunit. Interacts with L10 and the large rRNA to form the base of the stalk. L10 forms an elongated spine to which L12 dimers bind in a sequential fashion forming a multimeric L10(L12)X complex. One or more lysine residues are methylated.

Functionally, forms part of the ribosomal stalk which helps the ribosome interact with GTP-bound translation factors. The sequence is that of Large ribosomal subunit protein uL11 from Lactococcus lactis subsp. cremoris (strain MG1363).